Here is a 157-residue protein sequence, read N- to C-terminus: Aspartate carbamoyltransferase regulatory chain (157 aa).

Positions 108, 113, 138, and 141 each coordinate Zn(2+).

This sequence belongs to the PyrI family. In terms of assembly, contains catalytic and regulatory chains. It depends on Zn(2+) as a cofactor.

In terms of biological role, involved in allosteric regulation of aspartate carbamoyltransferase. The polypeptide is Aspartate carbamoyltransferase regulatory chain (Korarchaeum cryptofilum (strain OPF8)).